The sequence spans 602 residues: Pentatricopeptide repeat-containing protein At5g11310, mitochondrial (602 aa).

The N-terminal 35 residues, 1–35 (MNSLFTAFRRNLLLNPNPHRNFFLHRLLSSSRRSS), are a transit peptide targeting the mitochondrion. PPR repeat units lie at residues 134-165 (SPSL…VRSD), 172-202 (SADT…ARSY), 211-241 (ELRL…IGGT), 249-283 (SVRI…NVKP), 284-318 (TVVT…EMEI), 319-353 (NFMV…ESGP), 354-388 (TIVT…GVDP), 389-423 (TTTT…GHSP), 424-458 (DRLT…GIDP), 459-493 (DLLT…GIIP), and 494-528 (QYIT…PHSK).

It belongs to the PPR family. P subfamily.

It is found in the mitochondrion. This chain is Pentatricopeptide repeat-containing protein At5g11310, mitochondrial, found in Arabidopsis thaliana (Mouse-ear cress).